The following is a 221-amino-acid chain: Iron-sulfur cluster repair protein YtfE (221 aa).

The protein belongs to the RIC family. YtfE subfamily. As to quaternary structure, homodimer.

Its subcellular location is the cytoplasm. Functionally, di-iron-containing protein involved in the repair of iron-sulfur clusters damaged by oxidative and nitrosative stress conditions. The polypeptide is Iron-sulfur cluster repair protein YtfE (Edwardsiella ictaluri (strain 93-146)).